The sequence spans 1984 residues: Spermatogenesis-associated protein 31H1 (1984 aa).

5 disordered regions span residues 448–467 (MGLTKSKNQSMKSPGTTPGP), 1045–1067 (PMEESEDSQSDSQTRISESQHSL), 1181–1287 (YRER…SDSK), 1326–1346 (RIGATQTSTASLKRQPKKPSQ), and 1439–1984 (QQPR…EATR). 3 stretches are compositionally biased toward polar residues: residues 450-463 (LTKSKNQSMKSPGT), 1058-1067 (TRISESQHSL), and 1205-1226 (TQASKSPTSTIDLQSGPSQSPA). Over residues 1238–1247 (SRPDLVEKTK) the composition is skewed to basic and acidic residues. Composition is skewed to polar residues over residues 1458-1471 (TDSQSGIAFQTASV) and 1492-1508 (RNETSSQESKNLSTPGT). Composition is skewed to basic and acidic residues over residues 1532–1558 (DKLTHKEHNHPSFYRERTPRGPSERTR) and 1568–1579 (SPSERSQRSSLE). 3 consecutive repeat copies span residues 1593–1600 (PSRKNHSS), 1601–1608 (PSERSWRS), and 1609–1616 (PSQRNHCS). A 27 X 8 AA approximate tandem repeat of P-S-E-R-S-H-H-S region spans residues 1593 to 1935 (PSRKNHSSPS…CSPSERSRRS (343 aa)). Over residues 1599-1610 (SSPSERSWRSPS) the composition is skewed to low complexity. Positions 1620 to 1630 (RSCHSLSERGL) are enriched in basic and acidic residues. Basic residues predominate over residues 1636-1647 (RSHRGPSQRRHH). Tandem repeats lie at residues 1641–1648 (PSQRRHHS), 1649–1656 (PSERSHRS), and 1657–1664 (PSERSHRS). Basic and acidic residues predominate over residues 1648–1667 (SPSERSHRSPSERSHRSSSE). A compositionally biased stretch (basic residues) spans 1668 to 1679 (RRHRSPSQRSHR). Positions 1680–1691 (GPSERSHCSPSE) are enriched in basic and acidic residues. A run of 19 repeats spans residues 1681 to 1688 (PSERSHCS), 1689 to 1696 (PSERRHRS), 1697 to 1704 (PSQRSHRG), 1705 to 1712 (PSERRHHS), 1713 to 1720 (PSKRSHRS), 1721 to 1728 (PARRSHRS), 1729 to 1736 (PSERSHHS), 1737 to 1744 (PSERSHHS), 1745 to 1752 (PSERRHHS), 1753 to 1760 (PSERSHCS), 1761 to 1768 (PSERSHCS), 1769 to 1776 (PSERRHRS), 1777 to 1784 (PSERRHHS), 1785 to 1792 (PSEKSHHS), 1793 to 1800 (PSERSHHS), 1801 to 1808 (PSERRRHS), 1848 to 1855 (PSEKSHLS), 1864 to 1871 (PSERRGHS), and 1880 to 1887 (PSERSHRS). Over residues 1692 to 1727 (RRHRSPSQRSHRGPSERRHHSPSKRSHRSPARRSHR) the composition is skewed to basic residues. The segment covering 1728 to 1869 (SPSERSHHSP…SRCSPSERRG (142 aa)) has biased composition (basic and acidic residues). Basic and acidic residues-rich tracts occupy residues 1895–1917 (RTSERSHRSSCERTRHSPSEMRP), 1928–1941 (PSERSRRSPLKEGL), and 1949–1959 (RPSHSLSRDFK). Tandem repeats lie at residues 1921-1928 (SGRNHCSP) and 1929-1935 (SERSRRS). Polar residues predominate over residues 1960–1969 (NQTTLLGTTH).

Expressed in sperm (at protein level).

This is Spermatogenesis-associated protein 31H1 from Homo sapiens (Human).